The sequence spans 562 residues: Arginine--tRNA ligase (562 aa).

A 'HIGH' region motif is present at residues 121–131 (PNIAKPMGMGH).

The protein belongs to the class-I aminoacyl-tRNA synthetase family. In terms of assembly, monomer.

The protein localises to the cytoplasm. It catalyses the reaction tRNA(Arg) + L-arginine + ATP = L-arginyl-tRNA(Arg) + AMP + diphosphate. This chain is Arginine--tRNA ligase, found in Limosilactobacillus fermentum (strain NBRC 3956 / LMG 18251) (Lactobacillus fermentum).